Reading from the N-terminus, the 294-residue chain is Enoyl-CoA hydratase domain-containing protein 3, mitochondrial (294 aa).

The N-terminal 61 residues, 1–61 (MSWLRSCGER…IILNNPQQRN (61 aa)), are a transit peptide targeting the mitochondrion.

It belongs to the enoyl-CoA hydratase/isomerase family.

It is found in the mitochondrion. May play a role in fatty acid biosynthesis and insulin sensitivity. This Xenopus laevis (African clawed frog) protein is Enoyl-CoA hydratase domain-containing protein 3, mitochondrial (echdc3).